The following is a 314-amino-acid chain: DNA-directed RNA polymerase subunit alpha (314 aa).

The interval 1-228 (MIEIEKPKIE…EHLSIFVNLT (228 aa)) is alpha N-terminal domain (alpha-NTD). Residues 245–314 (KEKVLEMTIE…DLGLSLRNEN (70 aa)) are alpha C-terminal domain (alpha-CTD).

Belongs to the RNA polymerase alpha chain family. Homodimer. The RNAP catalytic core consists of 2 alpha, 1 beta, 1 beta' and 1 omega subunit. When a sigma factor is associated with the core the holoenzyme is formed, which can initiate transcription.

The enzyme catalyses RNA(n) + a ribonucleoside 5'-triphosphate = RNA(n+1) + diphosphate. Its function is as follows. DNA-dependent RNA polymerase catalyzes the transcription of DNA into RNA using the four ribonucleoside triphosphates as substrates. This is DNA-directed RNA polymerase subunit alpha from Listeria innocua serovar 6a (strain ATCC BAA-680 / CLIP 11262).